Reading from the N-terminus, the 208-residue chain is Guanylate kinase (208 aa).

In terms of domain architecture, Guanylate kinase-like spans 8–187 (GVCLVISAPS…AISQARSVLT (180 aa)). 15–22 (APSGAGKS) is an ATP binding site.

It belongs to the guanylate kinase family.

The protein resides in the cytoplasm. The catalysed reaction is GMP + ATP = GDP + ADP. Its function is as follows. Essential for recycling GMP and indirectly, cGMP. This is Guanylate kinase from Gluconobacter oxydans (strain 621H) (Gluconobacter suboxydans).